Here is a 396-residue protein sequence, read N- to C-terminus: 1-deoxy-D-xylulose 5-phosphate reductoisomerase (396 aa).

The NADPH site is built by threonine 10, glycine 11, serine 12, isoleucine 13, and asparagine 123. Residue lysine 124 participates in 1-deoxy-D-xylulose 5-phosphate binding. Glutamate 125 is a binding site for NADPH. Mn(2+) is bound at residue aspartate 149. 1-deoxy-D-xylulose 5-phosphate contacts are provided by serine 150, glutamate 151, serine 185, and histidine 208. Residue glutamate 151 coordinates Mn(2+). Residue glycine 214 coordinates NADPH. 1-deoxy-D-xylulose 5-phosphate contacts are provided by serine 221, asparagine 226, lysine 227, and glutamate 230. Glutamate 230 contacts Mn(2+).

Belongs to the DXR family. Requires Mg(2+) as cofactor. It depends on Mn(2+) as a cofactor.

It catalyses the reaction 2-C-methyl-D-erythritol 4-phosphate + NADP(+) = 1-deoxy-D-xylulose 5-phosphate + NADPH + H(+). Its pathway is isoprenoid biosynthesis; isopentenyl diphosphate biosynthesis via DXP pathway; isopentenyl diphosphate from 1-deoxy-D-xylulose 5-phosphate: step 1/6. Its function is as follows. Catalyzes the NADPH-dependent rearrangement and reduction of 1-deoxy-D-xylulose-5-phosphate (DXP) to 2-C-methyl-D-erythritol 4-phosphate (MEP). This Shewanella sp. (strain ANA-3) protein is 1-deoxy-D-xylulose 5-phosphate reductoisomerase.